Reading from the N-terminus, the 823-residue chain is DNA topoisomerase 4 subunit A (823 aa).

Positions 30 to 496 constitute a Topo IIA-type catalytic domain; the sequence is LPDIRDGLKP…KAIEIDTASL (467 aa). The O-(5'-phospho-DNA)-tyrosine intermediate role is filled by Y118.

The protein belongs to the type II topoisomerase GyrA/ParC subunit family. ParC type 2 subfamily. Heterotetramer composed of ParC and ParE.

It localises to the cell membrane. The enzyme catalyses ATP-dependent breakage, passage and rejoining of double-stranded DNA.. Its activity is regulated as follows. Inhibited by quinolones, such as levofloxacin. Its function is as follows. Topoisomerase IV is essential for chromosome segregation. It relaxes supercoiled DNA. Performs the decatenation events required during the replication of a circular DNA molecule. This Streptococcus pneumoniae serotype 4 (strain ATCC BAA-334 / TIGR4) protein is DNA topoisomerase 4 subunit A.